A 290-amino-acid chain; its full sequence is Light-independent protochlorophyllide reductase iron-sulfur ATP-binding protein (290 aa).

ATP is bound by residues 10–15 and K39; that span reads GIGKST. Mg(2+) is bound at residue S14. 2 residues coordinate [4Fe-4S] cluster: C95 and C129. 180–181 contributes to the ATP binding site; that stretch reads NR.

This sequence belongs to the NifH/BchL/ChlL family. Homodimer. Protochlorophyllide reductase is composed of three subunits; ChlL, ChlN and ChlB. The cofactor is [4Fe-4S] cluster.

Its subcellular location is the plastid. It is found in the chloroplast. It carries out the reaction chlorophyllide a + oxidized 2[4Fe-4S]-[ferredoxin] + 2 ADP + 2 phosphate = protochlorophyllide a + reduced 2[4Fe-4S]-[ferredoxin] + 2 ATP + 2 H2O. It participates in porphyrin-containing compound metabolism; chlorophyll biosynthesis (light-independent). Component of the dark-operative protochlorophyllide reductase (DPOR) that uses Mg-ATP and reduced ferredoxin to reduce ring D of protochlorophyllide (Pchlide) to form chlorophyllide a (Chlide). This reaction is light-independent. The L component serves as a unique electron donor to the NB-component of the complex, and binds Mg-ATP. This chain is Light-independent protochlorophyllide reductase iron-sulfur ATP-binding protein, found in Pyropia yezoensis (Susabi-nori).